The chain runs to 226 residues: Thiopurine S-methyltransferase (226 aa).

S-adenosyl-L-methionine is bound by residues Trp-10, Leu-47, Glu-68, and Arg-130.

Belongs to the class I-like SAM-binding methyltransferase superfamily. TPMT family.

It is found in the cytoplasm. It carries out the reaction S-adenosyl-L-methionine + a thiopurine = S-adenosyl-L-homocysteine + a thiopurine S-methylether.. The chain is Thiopurine S-methyltransferase from Shewanella sediminis (strain HAW-EB3).